A 336-amino-acid polypeptide reads, in one-letter code: Atypical chemokine receptor 1 (336 aa).

At 1–63 (MGNCLHQAEL…CNLLDDSSLP (63 aa)) the chain is on the extracellular side. Asparagine 16 and asparagine 33 each carry an N-linked (GlcNAc...) asparagine glycan. 2 disulfides stabilise this stretch: cysteine 51–cysteine 276 and cysteine 129–cysteine 195. A helical transmembrane segment spans residues 64–84 (FFILASVLGILASSTVLFMLF). The Cytoplasmic portion of the chain corresponds to 85-95 (RPLFRWQLCPG). A helical membrane pass occupies residues 96-116 (WPVLAQLAVGSALFSIVVPIL). At 117–129 (APGLGNTRSSALC) the chain is on the extracellular side. The helical transmembrane segment at 130-153 (SLGYCVWYGSAFAQALLLGCHASL) threads the bilayer. The Cytoplasmic segment spans residues 154–166 (GPKLGAGQVPGLT). Residues 167–187 (LGLTVGLWGAAALLTVPITLA) traverse the membrane as a helical segment. The Extracellular segment spans residues 188–207 (SGASDGLCTPIYSTELKALQ). The helical transmembrane segment at 208–228 (ATHTVACFAIFVLLPLGLFGA) threads the bilayer. The Cytoplasmic segment spans residues 229 to 244 (KGVKKALGMGPGPWMT). A helical membrane pass occupies residues 245 to 265 (ILWIWFIFWWPHGVVLGLDFL). The Extracellular segment spans residues 266–287 (VRSKLLLLPTCLAQQVLDLLLN). The helical transmembrane segment at 288 to 308 (LAEALTIVHCVATPLLLALFC) threads the bilayer. The Cytoplasmic segment spans residues 309-336 (HQATRTLLPSLPLPERWSSPVDTLGSKS).

It belongs to the G-protein coupled receptor 1 family. Atypical chemokine receptor subfamily.

The protein localises to the early endosome. It is found in the recycling endosome. The protein resides in the membrane. Its function is as follows. Atypical chemokine receptor that controls chemokine levels and localization via high-affinity chemokine binding that is uncoupled from classic ligand-driven signal transduction cascades, resulting instead in chemokine sequestration, degradation, or transcytosis. Also known as interceptor (internalizing receptor) or chemokine-scavenging receptor or chemokine decoy receptor. Has a promiscuous chemokine-binding profile, interacting with inflammatory chemokines of both the CXC and the CC subfamilies but not with homeostatic chemokines. Acts as a receptor for chemokines including CCL2, CCL5, CCL7, CCL11, CCL13, CCL14, CCL17, CXCL5, CXCL6, IL8/CXCL8, CXCL11, GRO, RANTES, MCP-1 and TARC. May regulate chemokine bioavailability and, consequently, leukocyte recruitment through two distinct mechanisms: when expressed in endothelial cells, it sustains the abluminal to luminal transcytosis of tissue-derived chemokines and their subsequent presentation to circulating leukocytes; when expressed in erythrocytes, serves as blood reservoir of cognate chemokines but also as a chemokine sink, buffering potential surges in plasma chemokine levels. The chain is Atypical chemokine receptor 1 (ACKR1) from Sapajus apella (Brown-capped capuchin).